The primary structure comprises 860 residues: Leucine--tRNA ligase (860 aa).

Positions 42–52 (PYPSGRLHMGH) match the 'HIGH' region motif. A 'KMSKS' region motif is present at residues 619–623 (KMSKS). Position 622 (Lys622) interacts with ATP.

It belongs to the class-I aminoacyl-tRNA synthetase family.

The protein resides in the cytoplasm. It carries out the reaction tRNA(Leu) + L-leucine + ATP = L-leucyl-tRNA(Leu) + AMP + diphosphate. This is Leucine--tRNA ligase from Yersinia enterocolitica serotype O:8 / biotype 1B (strain NCTC 13174 / 8081).